The sequence spans 121 residues: Small ribosomal subunit protein uS13 (121 aa).

The disordered stretch occupies residues 93–121 (RGLPMRGQRTRTNARTRKGPRKSAAALKK).

Belongs to the universal ribosomal protein uS13 family. Part of the 30S ribosomal subunit. Forms a loose heterodimer with protein S19. Forms two bridges to the 50S subunit in the 70S ribosome.

In terms of biological role, located at the top of the head of the 30S subunit, it contacts several helices of the 16S rRNA. In the 70S ribosome it contacts the 23S rRNA (bridge B1a) and protein L5 of the 50S subunit (bridge B1b), connecting the 2 subunits; these bridges are implicated in subunit movement. Contacts the tRNAs in the A and P-sites. The polypeptide is Small ribosomal subunit protein uS13 (Methylibium petroleiphilum (strain ATCC BAA-1232 / LMG 22953 / PM1)).